Reading from the N-terminus, the 547-residue chain is bZIP transcription factor 29 (547 aa).

3 disordered regions span residues 1 to 199 (MGDT…SGGE), 244 to 312 (NSSE…DIAP), and 333 to 356 (GDES…TNSV). Positions 15-52 (LHSSFGTTSSSIPKNPISQLDLNPNFIRSSAPQFSKPF) are enriched in polar residues. A compositionally biased stretch (pro residues) spans 63-73 (PSHPNLIPPTS). Residues 74–89 (PFSQIPTTRQPGSHNF) show a composition bias toward polar residues. The segment covering 120–132 (FRDHDVSMEDRDS) has biased composition (basic and acidic residues). The span at 134 to 157 (VFNSNHSLPPSPFTRCNSTSSSSL) shows a compositional bias: polar residues. Basic and acidic residues predominate over residues 249–263 (DDSKNGNENRDDMES). The segment covering 264–275 (SRASGTKTNGSD) has biased composition (polar residues). Over residues 279–294 (ESSSVNESANNNMNSS) the composition is skewed to low complexity. Over residues 344-356 (GSMSRKVSPTNSV) the composition is skewed to polar residues. In terms of domain architecture, bZIP spans 394–457 (DPKRVKRILA…MGLTNQNNEL (64 aa)). The interval 396-417 (KRVKRILANRQSAARSKERKMR) is basic motif. A coiled-coil region spans residues 416 to 469 (MRYIVELEHKVQTLQTEATTLSAQLTLLQRDMMGLTNQNNELKFRLQAMEQQAR). The interval 422 to 457 (LEHKVQTLQTEATTLSAQLTLLQRDMMGLTNQNNEL) is leucine-zipper. Positions 517–535 (QLRQQPQQMQQQSHQQNHQ) are enriched in low complexity. The tract at residues 517 to 547 (QLRQQPQQMQQQSHQQNHQNGTMATKSESNE) is disordered. The span at 536-547 (NGTMATKSESNE) shows a compositional bias: polar residues.

As to quaternary structure, forms homodimers. Expressed in roots, leaves and flowers. Expressed in the root tips, lateral root primordia, and guard cells of leaves, hypocotyls and anthers.

It localises to the cytoplasm. The protein resides in the nucleus. Transcription factor that acts as a repressor of reproductive development, meristem size and plant growth. Regulates meristem size, cell size and cell number during plant development. Binds to the promoters of the cell cycle regulators CYCB1-2 and SMR4, and genes involved in cell wall organization, such as XTH9, EXPA1 and EXPA3. Possesses transactivation activity in yeast. Possesses transactivation activity in plant protoplasts. Plays a role in abiotic stress response by binding to the 5'-CAGCTG-3' DNA sequence found in the promoters of MYB44 and TRX8. Plays a role in osmosensory response by binding to the 5'-AGCTGT/G-3' DNA sequence found in the promoters of the hypoosmolarity-responsive genes CYP707A1 and CYP707A3. Binds to the 5'-AGCTGT-3' DNA sequence found in the promoter of the ZAT1 gene in response to abiotic stresses, such as oxidative stress, high-light, osmotic shock, salt and heat stresses. This is bZIP transcription factor 29 from Arabidopsis thaliana (Mouse-ear cress).